The primary structure comprises 385 residues: S-adenosylmethionine synthase (385 aa).

His14 provides a ligand contact to ATP. Residue Asp16 participates in Mg(2+) binding. Glu42 lines the K(+) pocket. L-methionine contacts are provided by Glu55 and Gln98. The tract at residues 98-108 (QSGDIAQAVDN) is flexible loop. Residues 165–167 (DAK), 232–233 (RF), Asp241, 247–248 (RK), Ala264, and Lys268 each bind ATP. Asp241 contributes to the L-methionine binding site. Residue Lys272 participates in L-methionine binding.

The protein belongs to the AdoMet synthase family. In terms of assembly, homotetramer; dimer of dimers. Mg(2+) is required as a cofactor. The cofactor is K(+).

The protein localises to the cytoplasm. The catalysed reaction is L-methionine + ATP + H2O = S-adenosyl-L-methionine + phosphate + diphosphate. It participates in amino-acid biosynthesis; S-adenosyl-L-methionine biosynthesis; S-adenosyl-L-methionine from L-methionine: step 1/1. Functionally, catalyzes the formation of S-adenosylmethionine (AdoMet) from methionine and ATP. The overall synthetic reaction is composed of two sequential steps, AdoMet formation and the subsequent tripolyphosphate hydrolysis which occurs prior to release of AdoMet from the enzyme. This Leuconostoc mesenteroides subsp. mesenteroides (strain ATCC 8293 / DSM 20343 / BCRC 11652 / CCM 1803 / JCM 6124 / NCDO 523 / NBRC 100496 / NCIMB 8023 / NCTC 12954 / NRRL B-1118 / 37Y) protein is S-adenosylmethionine synthase.